We begin with the raw amino-acid sequence, 131 residues long: MDKKTIYFICTGNSCRSQMAEGWGKKILGDEWQVYSGGIEAHGVNPKAIEAMKEVGIDISNHTSNLIDQNILHQSDLVVTLCSDADKNCPILPPSVKKEHWGFDDPAGKPWSEFQRVRDEIKTAIESFKTR.

Residues cysteine 10, cysteine 82, and cysteine 89 each act as nucleophile in the active site. 2 cysteine pairs are disulfide-bonded: cysteine 10–cysteine 82 and cysteine 82–cysteine 89.

This sequence belongs to the low molecular weight phosphotyrosine protein phosphatase family. Thioredoxin-coupled ArsC subfamily.

The protein resides in the cytoplasm. The catalysed reaction is arsenate + [thioredoxin]-dithiol + H(+) = arsenite + [thioredoxin]-disulfide + H2O. In terms of biological role, catalyzes the reduction of arsenate [As(V)] to arsenite [As(III)]. This is Arsenate reductase 2 from Staphylococcus epidermidis (strain ATCC 35984 / DSM 28319 / BCRC 17069 / CCUG 31568 / BM 3577 / RP62A).